A 417-amino-acid chain; its full sequence is Serine hydroxymethyltransferase (417 aa).

Residues Leu-122 and Gly-126–Leu-128 contribute to the (6S)-5,6,7,8-tetrahydrofolate site. Residue Lys-230 is modified to N6-(pyridoxal phosphate)lysine. Ser-355 to Phe-357 contributes to the (6S)-5,6,7,8-tetrahydrofolate binding site.

Belongs to the SHMT family. Homodimer. Requires pyridoxal 5'-phosphate as cofactor.

It is found in the cytoplasm. The enzyme catalyses (6R)-5,10-methylene-5,6,7,8-tetrahydrofolate + glycine + H2O = (6S)-5,6,7,8-tetrahydrofolate + L-serine. The protein operates within one-carbon metabolism; tetrahydrofolate interconversion. It functions in the pathway amino-acid biosynthesis; glycine biosynthesis; glycine from L-serine: step 1/1. Catalyzes the reversible interconversion of serine and glycine with tetrahydrofolate (THF) serving as the one-carbon carrier. This reaction serves as the major source of one-carbon groups required for the biosynthesis of purines, thymidylate, methionine, and other important biomolecules. Also exhibits THF-independent aldolase activity toward beta-hydroxyamino acids, producing glycine and aldehydes, via a retro-aldol mechanism. The sequence is that of Serine hydroxymethyltransferase from Francisella tularensis subsp. novicida (strain U112).